The following is a 114-amino-acid chain: MQQLIAEITKGQLKTDLPSFRPGDTLRVHVKVVEGTRERIQLFEGVVIKRRGGGISETFTVRKISYGVGVERTFPVHTPRIAKIEVLRRGKVRRAKLYYLRNLRGKKARIKEIR.

Belongs to the bacterial ribosomal protein bL19 family.

This protein is located at the 30S-50S ribosomal subunit interface and may play a role in the structure and function of the aminoacyl-tRNA binding site. In Bacillus cereus (strain AH187), this protein is Large ribosomal subunit protein bL19.